A 147-amino-acid chain; its full sequence is Transcriptional regulator MraZ (147 aa).

SpoVT-AbrB domains are found at residues 5–47 and 76–123; these read QQLR…SEKE and TFEI…SKSK.

This sequence belongs to the MraZ family. Forms oligomers.

It is found in the cytoplasm. Its subcellular location is the nucleoid. This Mycoplasmopsis synoviae (strain 53) (Mycoplasma synoviae) protein is Transcriptional regulator MraZ.